The primary structure comprises 238 residues: 1-(5-phosphoribosyl)-5-[(5-phosphoribosylamino)methylideneamino] imidazole-4-carboxamide isomerase (238 aa).

Aspartate 8 serves as the catalytic Proton acceptor. Residue aspartate 129 is the Proton donor of the active site.

This sequence belongs to the HisA/HisF family.

The protein localises to the cytoplasm. The enzyme catalyses 1-(5-phospho-beta-D-ribosyl)-5-[(5-phospho-beta-D-ribosylamino)methylideneamino]imidazole-4-carboxamide = 5-[(5-phospho-1-deoxy-D-ribulos-1-ylimino)methylamino]-1-(5-phospho-beta-D-ribosyl)imidazole-4-carboxamide. The protein operates within amino-acid biosynthesis; L-histidine biosynthesis; L-histidine from 5-phospho-alpha-D-ribose 1-diphosphate: step 4/9. In Lacticaseibacillus casei (strain BL23) (Lactobacillus casei), this protein is 1-(5-phosphoribosyl)-5-[(5-phosphoribosylamino)methylideneamino] imidazole-4-carboxamide isomerase.